The following is a 999-amino-acid chain: Sarcoplasmic/endoplasmic reticulum calcium ATPase 3 (999 aa).

Met-1 carries the post-translational modification N-acetylmethionine. The Cytoplasmic segment spans residues Met-1–Ser-48. A Phosphoserine modification is found at Ser-17. Thr-19 bears the Phosphothreonine mark. Ser-25 is modified (phosphoserine). Residues Leu-49–Ala-69 form a helical membrane-spanning segment. The Lumenal segment spans residues Leu-70–Val-89. The chain crosses the membrane as a helical span at residues Glu-90–Arg-110. The Cytoplasmic portion of the chain corresponds to Asn-111–Leu-253. A helical transmembrane segment spans residues Asp-254 to Val-273. The Lumenal segment spans residues Ile-274–Tyr-295. A helical membrane pass occupies residues Phe-296–Ala-313. Ca(2+) contacts are provided by Val-304, Ala-305, Ile-307, and Glu-309. Residues Val-314–Met-757 are Cytoplasmic-facing. The 4-aspartylphosphate intermediate role is filled by Asp-351. The Mg(2+) site is built by Asp-351 and Thr-353. Thr-353 is a binding site for ATP. Residues Ala-370–Gln-400 are interaction with phospholamban 1. The residue at position 415 (Thr-415) is a Phosphothreonine. Glu-442, Arg-489, Lys-515, Arg-560, Thr-625, Gly-626, and Asp-627 together coordinate ATP. Residue Ser-662 is modified to Phosphoserine. ATP contacts are provided by Arg-678 and Lys-684. Asp-703 is a Mg(2+) binding site. Asn-706 provides a ligand contact to ATP. A helical membrane pass occupies residues Lys-758 to Leu-777. Asn-768 and Glu-771 together coordinate Ca(2+). Topologically, residues Thr-778–Leu-787 are lumenal. Residues Ile-788–Gly-808 form a helical membrane-spanning segment. Residues Ile-788–Gly-808 are interaction with phospholamban 2. Asn-796, Thr-799, and Asp-800 together coordinate Ca(2+). At Phe-809–Leu-828 the chain is on the cytoplasmic side. Residues Ile-829 to Ala-851 traverse the membrane as a helical segment. The Lumenal portion of the chain corresponds to Ala-852–Thr-897. Residues Thr-898–Ser-917 traverse the membrane as a helical segment. Residue Glu-908 participates in Ca(2+) binding. Topologically, residues Glu-918–Asn-930 are cytoplasmic. The chain crosses the membrane as a helical span at residues Pro-931–Leu-949. Topologically, residues Val-950–Gly-964 are lumenal. The helical transmembrane segment at Arg-965–Lys-985 threads the bilayer. Over Tyr-986 to Lys-999 the chain is Cytoplasmic.

The protein belongs to the cation transport ATPase (P-type) (TC 3.A.3) family. Type IIA subfamily. In terms of assembly, interacts with sarcolipin (SLN). Interacts with phospholamban (PLN). Interacts with myoregulin (MRLN). Interacts with DWORF. Interacts with VMP1. Interacts with TUNAR; the interaction occurs at low levels in low glucose conditions and is increased by high glucose levels. Mg(2+) serves as cofactor. In terms of tissue distribution, found in most tissues. Most abundant in thymus, trachea, salivary gland, spleen, bone marrow, lymph node, peripheral leukocytes, pancreas and colon. Also detected in fetal tissues. Expressed in cell lineages of hematopoietic, epithelial, or embryonic origin and also expressed in several cancer cell lines.

The protein resides in the nucleus membrane. It is found in the endoplasmic reticulum membrane. Its subcellular location is the sarcoplasmic reticulum membrane. The catalysed reaction is Ca(2+)(in) + ATP + H2O = Ca(2+)(out) + ADP + phosphate + H(+). Inhibited by sarcolipin (SLN), phospholamban (PLN) and myoregulin (MRLN). Enhanced by DWORF; DWORF increases activity by displacing sarcolipin (SLN), phospholamban (PLN) and myoregulin (MRLN). This magnesium-dependent enzyme catalyzes the hydrolysis of ATP coupled with the transport of calcium. Transports calcium ions from the cytosol into the sarcoplasmic/endoplasmic reticulum lumen. Contributes to calcium sequestration involved in muscular excitation/contraction. The protein is Sarcoplasmic/endoplasmic reticulum calcium ATPase 3 of Homo sapiens (Human).